The primary structure comprises 376 residues: MVAGEASGDTLGADLILSLKKRFPNARFVGIGGQKMIANGFESWYPLEKLSVMGLFEVLKHLPSLLRLRKELIQKLLQLKPDVFIGIDAPDFNFKMEGILKENAIPTIHYVGPSVWAWREKRLLKICKQVDGVLVLFPFETAYYDKYGIPSKFVGHPLTNQVADSPDKHSARQQLGLSSDTPVTGILPGSRSSEINLMIDVYVQVATKLHEAYPQMKFVIPCVNQAAKERVALSISLYGKGIDFILLDQQAQLAMAASDQLIVTSGTATLEAALMQRPLILAIKLHPISYWIMKRLATTKWVGLPNVLAGKCIVPELIQENATVDKIAQTLDKLITDKEMREVQLTEFKKQYDALNQNASELAADAVVKWAKLKND.

This sequence belongs to the LpxB family.

The enzyme catalyses a lipid X + a UDP-2-N,3-O-bis[(3R)-3-hydroxyacyl]-alpha-D-glucosamine = a lipid A disaccharide + UDP + H(+). Its pathway is bacterial outer membrane biogenesis; LPS lipid A biosynthesis. Its function is as follows. Condensation of UDP-2,3-diacylglucosamine and 2,3-diacylglucosamine-1-phosphate to form lipid A disaccharide, a precursor of lipid A, a phosphorylated glycolipid that anchors the lipopolysaccharide to the outer membrane of the cell. This is Lipid-A-disaccharide synthase from Hydrogenovibrio crunogenus (strain DSM 25203 / XCL-2) (Thiomicrospira crunogena).